The following is a 492-amino-acid chain: 3,6-anhydro-alpha-L-galactose dehydrogenase (492 aa).

NADP(+) is bound by residues 160–161 (WN), 184–187 (KPSE), and 237–238 (GS). The active-site Proton acceptor is the Glu-259. Leu-260 is a binding site for NADP(+). Cys-293 serves as the catalytic Nucleophile. NADP(+) is bound at residue Glu-394.

The protein belongs to the aldehyde dehydrogenase family.

It catalyses the reaction 3,6-anhydro-alpha-L-galactopyranose + NADP(+) + H2O = 3,6-anhydro-L-galactonate + NADPH + 2 H(+). Significantly inhibited by EDTA. Activity is enhanced by Fe(2+), but is strongly inhibited by Mn(2+), Cu(2+), Zn(2+), Ni(2+) and Co(2+). Its function is as follows. Involved in the degradation of 3,6-anhydro-L-galactose, which is the major monomeric sugar of red macroalgae. Catalyzes the oxidation of 3,6-anhydro-L-galactose (AHG) to form 3,6-anhydrogalactonate (AHGA). Shows broad substrate specificity, with maximum activity toward AHG. The enzyme activities toward D-fructose, D-galactose and D-ribose are between 40% and 50% of the maximum, but those toward L-rhamnose, L-glyceraldehyde, D-glyceraldehyde, L-fucose and D-glucose are much lower. The protein is 3,6-anhydro-alpha-L-galactose dehydrogenase of Streptomyces coelicolor (strain ATCC BAA-471 / A3(2) / M145).